Here is a 396-residue protein sequence, read N- to C-terminus: S-arrestin (396 aa).

Belongs to the arrestin family.

Its function is as follows. Arrestin is one of the major proteins of the ros (retinal rod outer segments); it binds to photoactivated-phosphorylated rhodopsin, thereby apparently preventing the transducin-mediated activation of phosphodiesterase. The chain is S-arrestin from Aquarana catesbeiana (American bullfrog).